The chain runs to 198 residues: MPVEWLLIPFAYLLGSVSSAVIVSRTLGLPDPRQEGSKNPGATNVLRLGGKRAAILTLLGDASKGLIPLLIAKSMAVSPPLFAAIGFAAFVGHLYPVFFQFKGGKGVATALGVLLGFAWPVGLMALLTWIGVAALFRFSSLSALAAAVLAPVYVWLWLGSAELVVATLFMSMLLVYRHKGNIERLLKGEEARLGAKRL.

Transmembrane regions (helical) follow at residues 3–23, 81–101, 113–133, and 153–175; these read VEWL…AVIV, LFAA…FFQF, VLLG…IGVA, and YVWL…MLLV.

It belongs to the PlsY family. In terms of assembly, probably interacts with PlsX.

The protein localises to the cell inner membrane. It carries out the reaction an acyl phosphate + sn-glycerol 3-phosphate = a 1-acyl-sn-glycero-3-phosphate + phosphate. It participates in lipid metabolism; phospholipid metabolism. In terms of biological role, catalyzes the transfer of an acyl group from acyl-phosphate (acyl-PO(4)) to glycerol-3-phosphate (G3P) to form lysophosphatidic acid (LPA). This enzyme utilizes acyl-phosphate as fatty acyl donor, but not acyl-CoA or acyl-ACP. In Methylococcus capsulatus (strain ATCC 33009 / NCIMB 11132 / Bath), this protein is Glycerol-3-phosphate acyltransferase.